Consider the following 337-residue polypeptide: Putative 4-hydroxythreonine-4-phosphate dehydrogenase 2 (337 aa).

Residues His-173, His-217, and His-274 each contribute to the a divalent metal cation site.

It belongs to the PdxA family. In terms of assembly, homodimer. Requires Zn(2+) as cofactor. Mg(2+) serves as cofactor. The cofactor is Co(2+).

It localises to the cytoplasm. It catalyses the reaction 4-(phosphooxy)-L-threonine + NAD(+) = 3-amino-2-oxopropyl phosphate + CO2 + NADH. It functions in the pathway cofactor biosynthesis; pyridoxine 5'-phosphate biosynthesis; pyridoxine 5'-phosphate from D-erythrose 4-phosphate: step 4/5. Catalyzes the NAD(P)-dependent oxidation of 4-(phosphooxy)-L-threonine (HTP) into 2-amino-3-oxo-4-(phosphooxy)butyric acid which spontaneously decarboxylates to form 3-amino-2-oxopropyl phosphate (AHAP). The protein is Putative 4-hydroxythreonine-4-phosphate dehydrogenase 2 of Pseudomonas aeruginosa (strain ATCC 15692 / DSM 22644 / CIP 104116 / JCM 14847 / LMG 12228 / 1C / PRS 101 / PAO1).